A 776-amino-acid polypeptide reads, in one-letter code: Transcription factor MYB3R-1 (776 aa).

The interval Met1–Glu41 is disordered. 3 HTH myb-type domains span residues Ala30–Leu81, Asn82–Ile137, and Asn138–Leu188. 3 DNA-binding regions (H-T-H motif) span residues Trp58–Leu81, Trp110–Leu133, and Trp161–Val184. Disordered stretches follow at residues Ser217–Asp253, Phe364–Glu384, and Asp401–His435. 3 stretches are compositionally biased toward polar residues: residues Cys240–Asp253, Phe364–Asp380, and Gly423–Ala432. Positions Lys648 to Leu655 match the Nuclear localization signal motif.

Component of a DREAM-like complex which modulates a variety of developmentally regulated genes and of the mitotic genes in proliferating and differentiated cells. Expressed ubiquitously at low levels. Expressed in roots, cotyledons, flowers and leaves, especially in vascular tissues.

It is found in the nucleus. Functionally, transcription factor that binds 5'-AACGG-3' motifs in gene promoters. Transcription activator involved in the regulation of cytokinesis, probably via the activation of several G2/M phase-specific genes transcription (e.g. KNOLLE). Transcription repressor that regulates organ growth. Binds to the promoters of G2/M-specific genes and to E2F target genes to prevent their expression in post-mitotic cells and to restrict the time window of their expression in proliferating cells. Required for the maintenance of diploidy. The polypeptide is Transcription factor MYB3R-1 (Arabidopsis thaliana (Mouse-ear cress)).